Consider the following 89-residue polypeptide: Small ribosomal subunit protein uS15 (89 aa).

The protein belongs to the universal ribosomal protein uS15 family. In terms of assembly, part of the 30S ribosomal subunit. Forms a bridge to the 50S subunit in the 70S ribosome, contacting the 23S rRNA.

One of the primary rRNA binding proteins, it binds directly to 16S rRNA where it helps nucleate assembly of the platform of the 30S subunit by binding and bridging several RNA helices of the 16S rRNA. Functionally, forms an intersubunit bridge (bridge B4) with the 23S rRNA of the 50S subunit in the ribosome. The polypeptide is Small ribosomal subunit protein uS15 (Sulfurovum sp. (strain NBC37-1)).